Reading from the N-terminus, the 266-residue chain is MNITPFPTLSPATIDAINVIGQWLAQDDFSGEVPYQADCVILAGNAVMPTIDAACKIARDQQIPLLISGGIGHSTTFLYSAIAQHPHYNTIRTTGRAEATILADIAHQFWHIPHEKIWIEDQSTNCGENARFSIALLNQAVERVHTAIVVQDPTMQRRTMATFRRMTGDNPDAPRWLSYPGFVPQLGNNADSVIFINQLQGLWPVERYLSLLTGELPRLRDDSDGYGPRGRDFIVHVDFPAEVIHAWQTLKHDAVLIEAMESRSLR.

The protein to S.coelicolor SCO4629. As to quaternary structure, monomer.

Functionally, binds S-adenosyl-L-methionine (AdoMet). This Escherichia coli (strain K12) protein is Protein YdcF (ydcF).